We begin with the raw amino-acid sequence, 645 residues long: Beta-galactosidase BgaA (645 aa).

A substrate-binding site is contributed by Arg102. Cys106 lines the Zn(2+) pocket. Asn140 lines the substrate pocket. Residue Glu141 is the Proton donor of the active site. Cys150, Cys152, and Cys155 together coordinate Zn(2+). Glu312 (nucleophile) is an active-site residue. Substrate-binding positions include Trp320 and Glu360–His363.

This sequence belongs to the glycosyl hydrolase 42 family.

The catalysed reaction is Hydrolysis of terminal non-reducing beta-D-galactose residues in beta-D-galactosides.. Its function is as follows. Hydrolyzes chromogen 5-bromo-4-chloro-3-indolyl-beta-D-galactopyranoside (X-Gal) and p-nitrophenyl-beta-D-galactoside (pNPGal). This Thermus sp protein is Beta-galactosidase BgaA.